Reading from the N-terminus, the 434-residue chain is Septin-7 (434 aa).

Y27 is subject to Phosphotyrosine. The Septin-type G domain occupies 44-313; it reads RGFEFTLMVV…ENYRSRKLAA (270 aa). An interaction with SEPTIN12 region spans residues 44–314; that stretch reads RGFEFTLMVV…NYRSRKLAAV (271 aa). Residues 54 to 61 form a G1 motif region; the sequence is GESGLGKS. 54-61 serves as a coordination point for GTP; that stretch reads GESGLGKS. S74 is modified (phosphoserine). Residues T87, G113, and 192 to 200 each bind GTP; that span reads KADTLTPEE. A G3 motif region spans residues 110–113; the sequence is DTPG. Positions 191-194 are G4 motif; that stretch reads AKAD. Phosphothreonine is present on T225. Positions 247 and 262 each coordinate GTP. Residues 329–434 are a coiled coil; sequence TKSPLAQMEE…EKNKKKGKIF (106 aa). Residue S331 is modified to Phosphoserine. N6-acetyllysine is present on K370. A compositionally biased stretch (basic and acidic residues) spans 377 to 407; sequence QRRHEQMKKNLEAQHKGLEEKRRQFEDEKAN. The interval 377-434 is disordered; sequence QRRHEQMKKNLEAQHKGLEEKRRQFEDEKANWEAQQRILEQQNSSRTLEKNKKKGKIF. S421 carries the post-translational modification Phosphoserine. T423 is subject to Phosphothreonine.

The protein belongs to the TRAFAC class TrmE-Era-EngA-EngB-Septin-like GTPase superfamily. Septin GTPase family. In terms of assembly, septins polymerize into heterooligomeric protein complexes that form filaments, and associate with cellular membranes, actin filaments and microtubules. GTPase activity is required for filament formation. Filaments are assembled from asymmetrical heterotrimers, composed of SEPTIN2, SEPTIN6 and SEPTIN7 that associate head-to-head to form a hexameric unit. Within the trimer, directly interacts with SEPTIN6, while interaction with SEPTIN2 seems indirect. In the absence of SEPTIN6, forms homodimers. Interacts directly with CENPE and links CENPE to septin filaments composed of SEPTIN2, SEPTIN6 and SEPTIN7. Interacts with SEPTIN5, SEPTIN8, SEPTIN9 and SEPTIN11. Component of a septin core octameric complex consisting of SEPTIN12, SEPTIN7, SEPTIN6 and SEPTIN2 or SEPTIN4 in the order 12-7-6-2-2-6-7-12 or 12-7-6-4-4-6-7-12 and located in the sperm annulus; the SEPTIN12:SEPTIN7 association is mediated by the respective GTP-binding domains.

The protein localises to the cytoplasm. The protein resides in the chromosome. It is found in the centromere. Its subcellular location is the kinetochore. It localises to the cytoskeleton. The protein localises to the spindle. The protein resides in the cleavage furrow. It is found in the midbody. Its subcellular location is the cilium axoneme. It localises to the cell projection. The protein localises to the cilium. The protein resides in the flagellum. Its function is as follows. Filament-forming cytoskeletal GTPase. Required for normal organization of the actin cytoskeleton. Required for normal progress through mitosis. Involved in cytokinesis. Required for normal association of CENPE with the kinetochore. Plays a role in ciliogenesis and collective cell movements. Forms a filamentous structure with SEPTIN12, SEPTIN6, SEPTIN2 and probably SEPTIN4 at the sperm annulus which is required for the structural integrity and motility of the sperm tail during postmeiotic differentiation. The protein is Septin-7 of Pan troglodytes (Chimpanzee).